The following is a 37-amino-acid chain: Protein YhiY (37 aa).

The polypeptide is Protein YhiY (Escherichia coli (strain K12)).